A 393-amino-acid chain; its full sequence is Endoplasmic reticulum junction formation protein lunapark-A (393 aa).

Residues 1–45 lie on the Cytoplasmic side of the membrane; it reads MGAVVSRWRAKPSTVEVLEGLDKDIQVLEEYREKNHKQLKLWVYR. The helical transmembrane segment at 46-66 threads the bilayer; the sequence is LLLYSALLYLMACAVVYAWYI. Residues 67–69 are Lumenal-facing; that stretch reads PER. A helical membrane pass occupies residues 70-90; it reads MIGKLIVASPFLLFPLLIWLL. Topologically, residues 91–393 are cytoplasmic; sequence RKLLIILYNK…EQDVSAMEVE (303 aa). Positions 95 to 130 form a coiled coil; that stretch reads IILYNKRTERNNEKLEELKAEKKKILEQVMETETYK. The segment at 146-209 is disordered; that stretch reads KLELETQPIG…PPEKGLSAST (64 aa). The segment covering 176-190 has biased composition (pro residues); sequence TGRPPPVPVPGPSVP. The C4-type; plays a role in ER morphology zinc-finger motif lies at 269–294; it reads CQQCLSHNGMALKEEFEYIAFRCAYC. Residues 314 to 393 are disordered; the sequence is AAEAKTSQDP…EQDVSAMEVE (80 aa). Basic and acidic residues-rich tracts occupy residues 340-353 and 364-383; these read ESKEAGPEPVKAGD and EEMKPGDPEPHTDIPDKSDG.

Belongs to the lunapark family. Homodimer; homodimerization requires the C4-type zinc finger motif and decreases during mitosis in a phosphorylation-dependent manner. Phosphorylated. Phosphorylation occurs during interphase. Phosphorylation also occurs during mitosis; these phosphorylations reduce both its homodimerization and the ER three-way tubular junction formation.

It localises to the endoplasmic reticulum membrane. Functionally, endoplasmic reticulum (ER)-shaping membrane protein that plays a role in determining ER morphology. Involved in the stabilization of nascent three-way ER tubular junctions within the ER network. May also play a role as a curvature-stabilizing protein within three-way ER tubular junction network. This chain is Endoplasmic reticulum junction formation protein lunapark-A (lnpka), found in Danio rerio (Zebrafish).